Reading from the N-terminus, the 481-residue chain is Keratin, type I cytoskeletal 39 (481 aa).

A disordered region spans residues 1–25 (MDTKGSTVTISSSTPPQNCSGNTNV). The interval 1–90 (MDTKGSTVTI…RCSDGINSHE (90 aa)) is head. Positions 90-401 (EKETMQILNE…SLLESLDGRL (312 aa)) constitute an IF rod domain. The interval 91–125 (KETMQILNERLASYLEKVRMLEGENADLEDKIQEE) is coil 1A. Residues 126 to 136 (CSKTLPILCPD) are linker 1. Residues 137-237 (YLSYYTTIEQ…HEEEINSLQC (101 aa)) form a coil 1B region. The linker 12 stretch occupies residues 238-253 (QLGDRINIEVTAAPSV). Positions 254–397 (DLNQILQKMR…ATYRSLLESL (144 aa)) are coil 2. Residues 398–481 (DGRLPCNPCT…PCYITRPAKV (84 aa)) are tail.

This sequence belongs to the intermediate filament family. In terms of assembly, heterotetramer of two type I and two type II keratins.

May play a role in late hair differentiation. The polypeptide is Keratin, type I cytoskeletal 39 (Krt39) (Rattus norvegicus (Rat)).